Here is a 108-residue protein sequence, read N- to C-terminus: Nucleoid-associated protein CPS_3743 (108 aa).

Residues N87–F108 are disordered.

The protein belongs to the YbaB/EbfC family. As to quaternary structure, homodimer.

The protein resides in the cytoplasm. It localises to the nucleoid. Binds to DNA and alters its conformation. May be involved in regulation of gene expression, nucleoid organization and DNA protection. The chain is Nucleoid-associated protein CPS_3743 from Colwellia psychrerythraea (strain 34H / ATCC BAA-681) (Vibrio psychroerythus).